Here is a 586-residue protein sequence, read N- to C-terminus: NADH-quinone oxidoreductase subunit C/D 2 (586 aa).

The segment at 1–173 (MKWVNKGTVE…RTDPPSHDFE (173 aa)) is NADH dehydrogenase I subunit C. The tract at residues 197–586 (AELVLNWGPL…LDPVVGETDR (390 aa)) is NADH dehydrogenase I subunit D.

In the N-terminal section; belongs to the complex I 30 kDa subunit family. This sequence in the C-terminal section; belongs to the complex I 49 kDa subunit family. NDH-1 is composed of 13 different subunits. Subunits NuoB, CD, E, F, and G constitute the peripheral sector of the complex.

It localises to the cell inner membrane. The catalysed reaction is a quinone + NADH + 5 H(+)(in) = a quinol + NAD(+) + 4 H(+)(out). NDH-1 shuttles electrons from NADH, via FMN and iron-sulfur (Fe-S) centers, to quinones in the respiratory chain. The immediate electron acceptor for the enzyme in this species is believed to be ubiquinone. Couples the redox reaction to proton translocation (for every two electrons transferred, four hydrogen ions are translocated across the cytoplasmic membrane), and thus conserves the redox energy in a proton gradient. The sequence is that of NADH-quinone oxidoreductase subunit C/D 2 (nuoC2) from Aquifex aeolicus (strain VF5).